A 153-amino-acid chain; its full sequence is 3-hydroxyacyl-[acyl-carrier-protein] dehydratase FabZ (153 aa).

Histidine 54 is an active-site residue.

This sequence belongs to the thioester dehydratase family. FabZ subfamily.

It localises to the cytoplasm. The enzyme catalyses a (3R)-hydroxyacyl-[ACP] = a (2E)-enoyl-[ACP] + H2O. Its function is as follows. Involved in unsaturated fatty acids biosynthesis. Catalyzes the dehydration of short chain beta-hydroxyacyl-ACPs and long chain saturated and unsaturated beta-hydroxyacyl-ACPs. This Chlamydia trachomatis serovar L2 (strain ATCC VR-902B / DSM 19102 / 434/Bu) protein is 3-hydroxyacyl-[acyl-carrier-protein] dehydratase FabZ.